The following is a 188-amino-acid chain: Elongation factor P (188 aa).

This sequence belongs to the elongation factor P family.

The protein localises to the cytoplasm. The protein operates within protein biosynthesis; polypeptide chain elongation. Its function is as follows. Involved in peptide bond synthesis. Stimulates efficient translation and peptide-bond synthesis on native or reconstituted 70S ribosomes in vitro. Probably functions indirectly by altering the affinity of the ribosome for aminoacyl-tRNA, thus increasing their reactivity as acceptors for peptidyl transferase. The chain is Elongation factor P from Mycoplasma mobile (strain ATCC 43663 / 163K / NCTC 11711) (Mesomycoplasma mobile).